A 178-amino-acid chain; its full sequence is Nucleoplasmin-3 (178 aa).

Position 2 is an N-acetylalanine (Ala-2). Residues Ser-13 and Ser-16 each carry the phosphoserine modification. Arg-27 is subject to Omega-N-methylarginine. A disordered region spans residues 141-178 (TMSNDVSEEESEEEEEDSDEEEVELCPILPAKKQGGRP). A compositionally biased stretch (acidic residues) spans 146–164 (VSEEESEEEEEDSDEEEVE). A phosphoserine mark is found at Ser-147, Ser-151, and Ser-158.

It belongs to the nucleoplasmin family. As to quaternary structure, interacts with NPM (via N-terminus). Forms a pentamer with NPM at a ratio 4:1 (NPM3/NPM). Two pentamers form a decamer. In terms of processing, phosphorylated. In terms of tissue distribution, ubiquitous.

The protein localises to the nucleus. Its subcellular location is the nucleolus. In terms of biological role, plays a role in the regulation of diverse cellular processes such as ribosome biogenesis, chromatin remodeling or protein chaperoning. Modulates the histone chaperone function and the RNA-binding activity of nucleolar phosphoprotein B23/NPM. Efficiently mediates chromatin remodeling when included in a pentamer containing NPM3 and NPM. This chain is Nucleoplasmin-3 (NPM3), found in Homo sapiens (Human).